A 398-amino-acid polypeptide reads, in one-letter code: MSSSSSPPAASAAARLDLDGNPIAPLTICMIGAGGFIGSHLCEKLMAETAHVVYAVDVYCDKIRHLVDPAPPHLHGRISFHRLNIKNDSRLEGLIKMADLTINLAAICTPADYNTRPLDTIYSNFIDALPVVKYCSENNKRLIHFSTCEVYGKTIGSFLPTDHPLRKEPEFYVLKEDESPCIFGPIVKQRWSYACAKQLIERLIFAEGAENGLEFTIVRPFNWIGPRMDFIPGVDGPSEGVPRVLACFSNNLLRREPLKLVDGGQSQRTFVYIKDAIEAVHLMIENPARANGQIFNVGNPNNEVTVRQLAEMMTEVYANVSGEPPLDEPMIDVSSKQFYGEGYDDSDKRIPDMTIINKQLGWNPKTPLKDLLETTLTYQHKTYKEAIKRQMSQASASS.

Position 57-88 (aspartate 57–aspartate 88) interacts with NAD(+). Arginine 190 provides a ligand contact to substrate. The active-site Proton acceptor is the tyrosine 193. Tyrosine 193–lysine 197 contributes to the NAD(+) binding site. Asparagine 222 serves as a coordination point for substrate. Arginine 243 serves as a coordination point for NAD(+). Residues valine 244–phenylalanine 248, valine 261–arginine 268, and aspartate 345–arginine 349 each bind substrate.

It belongs to the NAD(P)-dependent epimerase/dehydratase family. In terms of assembly, homodimer. NAD(+) serves as cofactor.

It is found in the cytoplasm. Its function is as follows. Catalyzes the conversion of UDP-D-glucuronate to a mixture of UDP-D-apiose and UDP-D-xylose. D-Apiose (3-C-hydroxymethyl-d-erythrose) is the only plant cell wall monosaccharide with a branched carbon skeleton and found in rhamnogalacturonan II (RG-II), apiogalacturonan, and several apioglycosides. The polypeptide is UDP-D-apiose/UDP-D-xylose synthase (Oryza sativa subsp. japonica (Rice)).